Here is a 691-residue protein sequence, read N- to C-terminus: MKIVLQNNEQDCLLACYSMILGYFGRDVAIHELYSGEMIPPDGLSVSYLKNINMKHQVSMHVYKTDKKNSPNKIFYPKMLPVIIQWNDNHFVVVTKIYRKNVTLIDPAIGKVKYNYNDFMKKFSGYIITLSPNSSFTKKKRISEIIFPLKKIFKNRNTFLYIFSLFISQIVALWFSIILRDILNKSHDITYSFIMMISLVLFQTLSLLMKLGAQKNTNLLYESKISRQIFKGIFSRPLLYFRNNSVGTIIEKINLRTGIRDGILLKIFPSLLNFFTVFIVIIYLGTISFTLTLFLVIMNLLYMIFSFSLISIKRQANIQYTQQTIDFTSVVQEDLNQIEQIKAQANEKECVKRWTKKSAQTIFSYNKILNIDGITSAFNQGFNYICVILMMIFGIYLNQGNLVSIPDLIIFQSGISLFVSAVNQIQDVMFEISRLSIYGNKISDLLIENPQRIDNIEKHSNNAIILKDISYSYELNNYIFNNINFSIKKGEKIAIVGKSGSGKSTLFNILLGLISYEGEVTYGYENLRQIIGVVSQNMNLRKGSLIENIVSNNNSEELDIQKINDVLKDVNMLELVDSLPQKIFSQLFENGKNLSGGQIQRLLIAKSLLNNNKFIFWDEPFSSLDNQNRIHIYKNVLENPDYKSQTIIMISHHLDVLKYVDRVIYIDDKKIMIDKHNNLLLNDSYNSFVNE.

The Peptidase C39 domain occupies 6–130 (QNNEQDCLLA…KKFSGYIITL (125 aa)). The active site involves Cys12. Positions 158–434 (TFLYIFSLFI…IQDVMFEISR (277 aa)) constitute an ABC transmembrane type-1 domain. Transmembrane regions (helical) follow at residues 159 to 179 (FLYIFSLFISQIVALWFSIIL), 189 to 209 (ITYSFIMMISLVLFQTLSLLM), 262 to 284 (GILLKIFPSLLNFFTVFIVIIYL), 289 to 311 (FTLTLFLVIMNLLYMIFSFSLIS), and 385 to 405 (ICVILMMIFGIYLNQGNLVSI). Residues 464–689 (IILKDISYSY…LLNDSYNSFV (226 aa)) enclose the ABC transporter domain. 497–504 (GKSGSGKS) is a binding site for ATP.

Belongs to the ABC transporter superfamily.

Its subcellular location is the cell membrane. In terms of biological role, probably implicated in the export process of the lantibiotic lacticin-481/lactococcin-DR. The sequence is that of Lacticin-481/lactococcin-DR transport/processing ATP-binding protein lcnDR3 (lcnDR3) from Lactococcus lactis subsp. lactis (Streptococcus lactis).